The sequence spans 83 residues: Small ribosomal subunit protein bS16 (83 aa).

This sequence belongs to the bacterial ribosomal protein bS16 family.

The chain is Small ribosomal subunit protein bS16 from Magnetococcus marinus (strain ATCC BAA-1437 / JCM 17883 / MC-1).